We begin with the raw amino-acid sequence, 448 residues long: Alpha-2B adrenergic receptor (448 aa).

Residues 1 to 12 are Extracellular-facing; that stretch reads MDHQEPYSVQAT. Residues 13-38 form a helical membrane-spanning segment; sequence AAIAAVITFLILFTIFGNALVILAVL. Residues 39–49 are Cytoplasmic-facing; sequence TSRSLPAPQNL. Residues 50–75 form a helical membrane-spanning segment; sequence FLVSLAAADILVATLIIPFSLANELL. Residues 76 to 85 lie on the Extracellular side of the membrane; the sequence is GYWYFWRTWC. A disulfide bond links Cys85 and Cys163. A helical membrane pass occupies residues 86 to 108; that stretch reads EVYLALDVLFCTSSIVHLCAISL. At 109–130 the chain is on the cytoplasmic side; that stretch reads DRYWAVSRALEYNSKRTPRRIK. The helical transmembrane segment at 131 to 153 threads the bilayer; sequence CIILTVWLIAAVISLPPLIYKGD. Residues 154-168 lie on the Extracellular side of the membrane; that stretch reads QGPSPRGPQCKINQE. The chain crosses the membrane as a helical span at residues 169-192; the sequence is AWYILASSIGSFFAPCLIMILVYL. Topologically, residues 193 to 370 are cytoplasmic; it reads RIYLIAKRSH…MTREKRFTFV (178 aa). Residues 203-326 are disordered; that stretch reads RRGPRAKGGP…PASMCSPSLQ (124 aa). The span at 293-309 shows a compositional bias: acidic residues; sequence AEEEAEEEEEEEGDECE. Residues 371–394 form a helical membrane-spanning segment; it reads LAVVIGVFVLCWFPFFFTYSLGAI. At 395–403 the chain is on the extracellular side; the sequence is CPQHCKVPH. Residues 404–427 form a helical membrane-spanning segment; that stretch reads GLFQFFFWIGYCNSSLNPVIYTIF. At 428 to 448 the chain is on the cytoplasmic side; the sequence is NQDFRRAFRRILCRQWTQTAW. A lipid anchor (S-palmitoyl cysteine) is attached at Cys440.

Belongs to the G-protein coupled receptor 1 family. Adrenergic receptor subfamily. ADRA2B sub-subfamily. Interacts with RAB26. Interacts with PPP1R9B.

The protein resides in the cell membrane. Alpha-2 adrenergic receptors mediate the catecholamine-induced inhibition of adenylate cyclase through the action of G proteins. The chain is Alpha-2B adrenergic receptor (ADRA2B) from Cavia porcellus (Guinea pig).